The sequence spans 505 residues: Catalase (505 aa).

Positions 1 to 25 (MSQQDKKLTGVFGHPVSDRENSMTA) are disordered. Residues H56 and N129 contribute to the active site. Residue Y339 coordinates heme.

It belongs to the catalase family. As to quaternary structure, homodimer. Heme is required as a cofactor.

The enzyme catalyses 2 H2O2 = O2 + 2 H2O. Functionally, decomposes hydrogen peroxide into water and oxygen; serves to protect cells from the toxic effects of hydrogen peroxide. The sequence is that of Catalase (katA) from Staphylococcus aureus.